The sequence spans 471 residues: UDP-N-acetylmuramate--L-alanine ligase (471 aa).

Residue 114–120 (GTHGKTT) participates in ATP binding.

It belongs to the MurCDEF family.

It localises to the cytoplasm. The enzyme catalyses UDP-N-acetyl-alpha-D-muramate + L-alanine + ATP = UDP-N-acetyl-alpha-D-muramoyl-L-alanine + ADP + phosphate + H(+). It participates in cell wall biogenesis; peptidoglycan biosynthesis. Functionally, cell wall formation. The protein is UDP-N-acetylmuramate--L-alanine ligase of Rhizobium meliloti (strain 1021) (Ensifer meliloti).